The following is a 249-amino-acid chain: Serine acetyltransferase (249 aa).

Belongs to the transferase hexapeptide repeat family.

The protein resides in the cytoplasm. It catalyses the reaction L-serine + acetyl-CoA = O-acetyl-L-serine + CoA. It functions in the pathway amino-acid biosynthesis; L-cysteine biosynthesis; L-cysteine from L-serine: step 1/2. This is Serine acetyltransferase (cysE) from Synechocystis sp. (strain ATCC 27184 / PCC 6803 / Kazusa).